Here is a 315-residue protein sequence, read N- to C-terminus: L-lactate dehydrogenase (315 aa).

NAD(+)-binding residues include valine 12, aspartate 33, and tyrosine 65. Substrate is bound by residues glutamine 82, arginine 88, and 120-123 (NPVD). NAD(+) contacts are provided by residues 118-120 (ISN) and serine 143. 148–151 (DTSR) is a binding site for substrate. Positions 153 and 168 each coordinate beta-D-fructose 1,6-bisphosphate. Residue histidine 175 is the Proton acceptor of the active site. Tyrosine 219 bears the Phosphotyrosine mark. Threonine 228 is a substrate binding site.

Belongs to the LDH/MDH superfamily. LDH family. In terms of assembly, homotetramer.

It is found in the cytoplasm. It catalyses the reaction (S)-lactate + NAD(+) = pyruvate + NADH + H(+). It functions in the pathway fermentation; pyruvate fermentation to lactate; (S)-lactate from pyruvate: step 1/1. With respect to regulation, allosterically activated by fructose 1,6-bisphosphate (FBP). In terms of biological role, catalyzes the conversion of lactate to pyruvate. The polypeptide is L-lactate dehydrogenase (Mycoplasmopsis pulmonis (strain UAB CTIP) (Mycoplasma pulmonis)).